Consider the following 337-residue polypeptide: Glyceraldehyde-3-phosphate dehydrogenase (337 aa).

NAD(+) contacts are provided by residues 13–14, aspartate 35, and lysine 80; that span reads RI. D-glyceraldehyde 3-phosphate contacts are provided by residues 151–153, threonine 182, 211–212, and arginine 234; these read SCT and TG. Cysteine 152 serves as the catalytic Nucleophile. NAD(+) is bound at residue asparagine 316.

It belongs to the glyceraldehyde-3-phosphate dehydrogenase family. As to quaternary structure, homotetramer.

It is found in the cytoplasm. It carries out the reaction D-glyceraldehyde 3-phosphate + phosphate + NAD(+) = (2R)-3-phospho-glyceroyl phosphate + NADH + H(+). It functions in the pathway carbohydrate degradation; glycolysis; pyruvate from D-glyceraldehyde 3-phosphate: step 1/5. The sequence is that of Glyceraldehyde-3-phosphate dehydrogenase (GAPD) from Mycosarcoma maydis (Corn smut fungus).